The primary structure comprises 787 residues: uncharacterized protein (787 aa).

Residues 1 to 22 form the signal peptide; it reads MKFKYCAIFFSGFLGLSAILAA. The N-palmitoyl cysteine moiety is linked to residue C23. C23 is lipidated: S-diacylglycerol cysteine. Disordered regions lie at residues 178–270 and 473–495; these read SDNV…DNKI and KSKEVKKTNRKEDGAQNQGKKES. Residues 181–208 show a composition bias toward polar residues; that stretch reads VKVSQRTGETTQKSKVTNPLKINTQNDP. Basic and acidic residues predominate over residues 209–219; that stretch reads ATKDLWEKIEA. Residues 242-261 show a composition bias toward low complexity; that stretch reads SSSSSLVNLKQSTDQTTTDD.

It belongs to the MG185/MG260 family.

The protein localises to the cell membrane. This is an uncharacterized protein from Mycoplasma pneumoniae (strain ATCC 29342 / M129 / Subtype 1) (Mycoplasmoides pneumoniae).